A 652-amino-acid polypeptide reads, in one-letter code: Regulator of DNA class I crossover intermediates 1 (652 aa).

Positions 1–231 (MNWVGGSRSR…TLFERLNSLG (231 aa)) form a DNA-binding region, binds DNA containing a D-loop. 2 disordered regions span residues 363 to 434 (NKTS…NIPS) and 469 to 506 (KISLDSAQSSRSTSYSPRPTDSCFSSSSDLPSEDEDQI). The segment covering 377-388 (YQREYNKNERND) has biased composition (basic and acidic residues). The span at 389-401 (LSTSFENDYYPSS) shows a compositional bias: polar residues. Residues 402-417 (SERKEKFENDYQEKTP) show a composition bias toward basic and acidic residues. A compositionally biased stretch (low complexity) spans 473-498 (DSAQSSRSTSYSPRPTDSCFSSSSDL).

As to quaternary structure, interacts with MSH5. Interacts with TEX11.

It is found in the chromosome. Functionally, involved in recombination, probably acting by stabilizing recombination intermediates during meiotic crossover formation. Required for normal germline development and fertility. Required for meiotic progression, complete chromosomal synapsis and crossover formation. Binds double-stranded DNA. However, also binds branched DNA molecules, such as those containing a D-loop or Holliday junction structure. Probably not required for formation of DNA double-strand breaks (DSBs). Also binds RNA in an RNA structure-independent manner, with a preference for binding 3'-UTR regions of mRNAs; may stabilize bound RNAs. The chain is Regulator of DNA class I crossover intermediates 1 from Homo sapiens (Human).